Consider the following 350-residue polypeptide: Uroporphyrinogen decarboxylase (350 aa).

Substrate contacts are provided by residues 28–32 (RQAGR), Phe-47, Asp-78, Tyr-155, Ser-210, and His-325.

The protein belongs to the uroporphyrinogen decarboxylase family. As to quaternary structure, homodimer.

The protein resides in the cytoplasm. The catalysed reaction is uroporphyrinogen III + 4 H(+) = coproporphyrinogen III + 4 CO2. Its pathway is porphyrin-containing compound metabolism; protoporphyrin-IX biosynthesis; coproporphyrinogen-III from 5-aminolevulinate: step 4/4. Its function is as follows. Catalyzes the decarboxylation of four acetate groups of uroporphyrinogen-III to yield coproporphyrinogen-III. The chain is Uroporphyrinogen decarboxylase from Synechocystis sp. (strain ATCC 27184 / PCC 6803 / Kazusa).